Consider the following 363-residue polypeptide: Methyltransferase pynC (363 aa).

Residues 199–200 (GG), Asp225, 254–255 (SF), Arg270, and Arg271 each bind S-adenosyl-L-methionine.

It belongs to the class I-like SAM-binding methyltransferase superfamily. Cation-independent O-methyltransferase family.

The protein operates within secondary metabolite biosynthesis. Its function is as follows. Methyltransferase; part of the gene cluster that mediates the biosynthesis of pyranonigrins, a family of antioxidative compounds. The first step of pyranonigrins biosynthesis is performed by the hybrid PKS-NRPS synthetase that condenses 6 malonyl-CoA units to an acetyl starter unit, to form a 1,3,5-trioxotetradecane-6,8-dienyl-ACP. The enoyl reductase (ER) domain of pynA is likely to be functional during the first two rounds of polyketide chain extension, to generate the saturated C-C bonds of the alkyl side chain. PynA subsequently forms the amide bond between the acyl chain and L-serine. Although pynA has a terminal reductase domain, it appears to require the thioesterase pynI for the release of the straight-chain intermediate from pynA via the formation of a tetramic acid pyranonigrin J. The methyltransferase pynC then coverts pyranonigrin J to pyranonigrin I via N-methylation. The FAD-dependent monooxygenase pynG catalyzes an epoxidation-mediated cyclization to form the dihydro-gamma-pyrone moiety, followed by pynD-catalyzed oxidation of the alcohol to the ketone and enolization to yield the characteristic tetramic acid-fused gamma-pyrone core of pyranonigrin H. Pyranonigrin H is substrate of pynH for dehydration-mediated exo-methylene formation from the serine side chain to produce pyranonigrin E, before the oxidase pynE reduces the exo-methylene of pyranonigrin E into a pendant methyl to form pyranonigrin G. The FAD-linked oxidoreductase pynB performs the reverse reaction and converts pyranonigrin G back to pyranonigrin E. This is Methyltransferase pynC from Aspergillus niger (strain ATCC MYA-4892 / CBS 513.88 / FGSC A1513).